A 213-amino-acid chain; its full sequence is uncharacterized protein (213 aa).

This is an uncharacterized protein from Bacillus subtilis (strain 168).